Consider the following 493-residue polypeptide: Uridine 5'-monophosphate synthase (493 aa).

An OPRTase region spans residues 1–207 (MVAQNSDKMR…VAKYIAAVQI (207 aa)). The tract at residues 208–233 (NSDGTFVGGDKGDVVRANDLQRTKLT) is domain linker. Residues 234–493 (YENRANLAKS…WAAYQDRVAK (260 aa)) form an OMPdecase region. Residue Lys-320 is part of the active site.

This sequence in the N-terminal section; belongs to the purine/pyrimidine phosphoribosyltransferase family. In the C-terminal section; belongs to the OMP decarboxylase family.

It catalyses the reaction orotidine 5'-phosphate + diphosphate = orotate + 5-phospho-alpha-D-ribose 1-diphosphate. The enzyme catalyses orotidine 5'-phosphate + H(+) = UMP + CO2. The protein operates within pyrimidine metabolism; UMP biosynthesis via de novo pathway; UMP from orotate: step 1/2. It participates in pyrimidine metabolism; UMP biosynthesis via de novo pathway; UMP from orotate: step 2/2. The polypeptide is Uridine 5'-monophosphate synthase (r-l) (Drosophila melanogaster (Fruit fly)).